The chain runs to 449 residues: MSSRKYFGTDGIRGRVGQGVISADFVLRLGNALGRVLTAGRSKRPLVLIGKDTRISGYMFEAALEAGLVAAGADVQLIGPMPTPAIAFLTSTLRADAGVVISASHNPHYDNGIKFFSAEGEKLDDATEAAIEAALDAPFHTVESERLGKAIRTRDAIGRYIEFCKASVPRGFTLHGLKMVLDCAHGATYHIAPMLFRELGAEVVVIGAAPDGLNINDGVGSTHIDNLAAKVRETGAQLGIAFDGDGDRVLMADDQGNPVDGDDLLYVLARSWQASGRLTGTVVGTLMTNYGLEKALAALQIPFQRAKVGDRYVHQALVEGGGTLGGETSGHLLCLDRATTGDGIVSALQVLEALGRDGHSLREALSSLSKVPQQTVNVRLGGGAAKAIVEAASVQQALQQAQAAVQGRGRAFLRPSGTEPVVRVTVEADEAGLMQDTLDRLAGAVRDAA.

The active-site Phosphoserine intermediate is Ser104. Residues Ser104, Asp243, Asp245, and Asp247 each coordinate Mg(2+). Ser104 carries the post-translational modification Phosphoserine.

This sequence belongs to the phosphohexose mutase family. Mg(2+) serves as cofactor. Activated by phosphorylation.

It catalyses the reaction alpha-D-glucosamine 1-phosphate = D-glucosamine 6-phosphate. Functionally, catalyzes the conversion of glucosamine-6-phosphate to glucosamine-1-phosphate. This is Phosphoglucosamine mutase from Xanthomonas campestris pv. campestris (strain 8004).